The following is a 357-amino-acid chain: Alanine racemase (357 aa).

Catalysis depends on Lys34, which acts as the Proton acceptor; specific for D-alanine. Position 34 is an N6-(pyridoxal phosphate)lysine (Lys34). Arg129 contributes to the substrate binding site. Tyr254 serves as the catalytic Proton acceptor; specific for L-alanine. Residue Met302 coordinates substrate.

The protein belongs to the alanine racemase family. Pyridoxal 5'-phosphate is required as a cofactor.

It catalyses the reaction L-alanine = D-alanine. The protein operates within amino-acid biosynthesis; D-alanine biosynthesis; D-alanine from L-alanine: step 1/1. Catalyzes the interconversion of L-alanine and D-alanine. Likely plays an important role in supplying D-alanine, which is an indispensable constituent in the biosynthesis of bacterial cell-wall peptidoglycan. The polypeptide is Alanine racemase (Aeromonas hydrophila subsp. hydrophila (strain ATCC 7966 / DSM 30187 / BCRC 13018 / CCUG 14551 / JCM 1027 / KCTC 2358 / NCIMB 9240 / NCTC 8049)).